We begin with the raw amino-acid sequence, 176 residues long: Small ribosomal subunit protein uS8c (176 aa).

It belongs to the universal ribosomal protein uS8 family. As to quaternary structure, part of the 30S ribosomal subunit.

It is found in the plastid. The protein localises to the chloroplast. Functionally, one of the primary rRNA binding proteins, it binds directly to 16S rRNA central domain where it helps coordinate assembly of the platform of the 30S subunit. The protein is Small ribosomal subunit protein uS8c (rps8) of Stigeoclonium helveticum (Green alga).